Consider the following 257-residue polypeptide: Ribonuclease HII (257 aa).

One can recognise an RNase H type-2 domain in the interval 72-257 (TYIAGIDEVG…FAPIKDMIQK (186 aa)). A divalent metal cation contacts are provided by D78, E79, and D170.

This sequence belongs to the RNase HII family. Mn(2+) serves as cofactor. It depends on Mg(2+) as a cofactor.

It is found in the cytoplasm. It carries out the reaction Endonucleolytic cleavage to 5'-phosphomonoester.. Functionally, endonuclease that specifically degrades the RNA of RNA-DNA hybrids. The chain is Ribonuclease HII from Bacillus cereus (strain G9842).